A 447-amino-acid chain; its full sequence is GTPase Der (447 aa).

2 EngA-type G domains span residues 4–165 (KIIT…SVEE) and 180–357 (LQIV…KIWN). GTP-binding positions include 10 to 17 (GRPNVGKS), 57 to 61 (DTPGL), 119 to 122 (NKCE), 186 to 193 (GRPNAGKS), 233 to 237 (DTAGL), and 298 to 301 (NKWD). In terms of domain architecture, KH-like spans 358–443 (KKITTNKLNK…PIRFTYVKNK (86 aa)).

This sequence belongs to the TRAFAC class TrmE-Era-EngA-EngB-Septin-like GTPase superfamily. EngA (Der) GTPase family. Associates with the 50S ribosomal subunit.

In terms of biological role, GTPase that plays an essential role in the late steps of ribosome biogenesis. This is GTPase Der from Rickettsia prowazekii (strain Madrid E).